A 117-amino-acid chain; its full sequence is NADH-ubiquinone oxidoreductase chain 3 (117 aa).

The next 3 membrane-spanning stretches (helical) occupy residues 1–21 (MLML…VMML), 58–78 (FLIA…LPMI), and 86–106 (LMNW…GLYH).

Belongs to the complex I subunit 3 family.

The protein localises to the mitochondrion membrane. The catalysed reaction is a ubiquinone + NADH + 5 H(+)(in) = a ubiquinol + NAD(+) + 4 H(+)(out). Its function is as follows. Core subunit of the mitochondrial membrane respiratory chain NADH dehydrogenase (Complex I) that is believed to belong to the minimal assembly required for catalysis. Complex I functions in the transfer of electrons from NADH to the respiratory chain. The immediate electron acceptor for the enzyme is believed to be ubiquinone. In Anopheles gambiae (African malaria mosquito), this protein is NADH-ubiquinone oxidoreductase chain 3 (mt:ND3).